Consider the following 396-residue polypeptide: Putative N(4)-(beta-N-acetylglucosaminyl)-L-asparaginase GG24090 (396 aa).

Residues 1–23 form the signal peptide; that stretch reads MKRHLGTCLWVLCLASTAFSSLA. Cystine bridges form between Cys100–Cys105 and Cys199–Cys215. Thr246 functions as the Nucleophile in the catalytic mechanism. Residues 274 to 277 and 297 to 300 contribute to the substrate site; these read RVGD and TGDG. Residues Cys357 and Cys384 are joined by a disulfide bond.

It belongs to the Ntn-hydrolase family. As to quaternary structure, heterotetramer of two alpha and two beta chains arranged as a dimer of alpha/beta heterodimers. Post-translationally, cleaved into an alpha and beta chain by autocatalysis; this activates the enzyme. The N-terminal residue of the beta subunit is responsible for the nucleophile hydrolase activity.

It catalyses the reaction N(4)-(beta-N-acetyl-D-glucosaminyl)-L-asparagine + H2O = N-acetyl-beta-D-glucosaminylamine + L-aspartate + H(+). In terms of biological role, cleaves the GlcNAc-Asn bond which joins oligosaccharides to the peptide of asparagine-linked glycoproteins. The protein is Putative N(4)-(beta-N-acetylglucosaminyl)-L-asparaginase GG24090 of Drosophila erecta (Fruit fly).